The primary structure comprises 4540 residues: Dynein heavy chain, cytoplasmic (4540 aa).

Positions M1–H1796 are stem. 6 coiled-coil regions span residues E440–Q482, R698–V722, V794–T827, Q975–Y995, R1169–D1251, and Q1295–N1311. AAA regions lie at residues Y1797–S2018, K2091–I2348, E2457–A2705, and Q2796–F3056. ATP contacts are provided by residues G1835–T1842, G2129–S2136, G2496–T2503, and G2834–T2841. Coiled-coil stretches lie at residues N3076 to Q3182, Q3289 to A3367, E3653 to T3688, and Q3820 to N3851. A stalk region spans residues N3076–A3367. A disordered region spans residues K3140–M3159. Positions L3444–Q3673 are AAA 5. Positions A3908–E4123 are AAA 6. 2 coiled-coil regions span residues Q4238–E4259 and R4313–G4342.

Belongs to the dynein heavy chain family. As to quaternary structure, consists of at least two heavy chains and a number of intermediate and light chains.

The protein localises to the cytoplasm. The protein resides in the cytoskeleton. Its function is as follows. Cytoplasmic dynein acts as a motor for the intracellular retrograde motility of vesicles and organelles along microtubules. Dynein has ATPase activity; the force-producing power stroke is thought to occur on release of ADP. This chain is Dynein heavy chain, cytoplasmic (DHC-8), found in Paramecium tetraurelia.